The following is a 424-amino-acid chain: MKVLVVGNGGREHAIAWKVAQSPLVKELYVAKGNAGIWEIAKRVDISPTDVEKLAEFAKNEGVDFTIVGPEAPLVEGIVDEFEKRGLKIFGPNKEAAKLEGSKAFAKTFMKKYGIPTARYEVFTDFEKAKEYVEKVGAPIVVKADGLAAGKGAVVCETVEKAIETLDRFLNKKIFGKSSERVVIEEFLEGEEASYIVMINGDRYVPLPTSQDHKRLLDEDKGPNTGGMGAYSPTPVINEEVEKRIREEIVERVIKGLKEEGIYYRGFLYAGLMITKEGPKVLEFNVRLGDPEAQPILMRVKNDFLETLLNFYEGKDVHIKEDERYALDVVLASRGYPEKPETGKIIHGLDYLKSMEDVVVFHAGTKKEGNFTVTSGGRVLNVCAYGKTLKEAKERAYEAIRYVCFEGMHYRKDIGDKAFKYLSE.

An ATP-grasp domain is found at 107–313 (KTFMKKYGIP…FLETLLNFYE (207 aa)). 133–194 (VEKVGAPIVV…EEFLEGEEAS (62 aa)) provides a ligand contact to ATP. Mg(2+) contacts are provided by glutamate 283 and asparagine 285.

The protein belongs to the GARS family. The cofactor is Mg(2+). Requires Mn(2+) as cofactor.

The catalysed reaction is 5-phospho-beta-D-ribosylamine + glycine + ATP = N(1)-(5-phospho-beta-D-ribosyl)glycinamide + ADP + phosphate + H(+). It participates in purine metabolism; IMP biosynthesis via de novo pathway; N(1)-(5-phospho-D-ribosyl)glycinamide from 5-phospho-alpha-D-ribose 1-diphosphate: step 2/2. The sequence is that of Phosphoribosylamine--glycine ligase from Aquifex aeolicus (strain VF5).